The sequence spans 287 residues: Acetylglutamate kinase (287 aa).

Substrate-binding positions include 65–66 (GG), R87, and N181.

This sequence belongs to the acetylglutamate kinase family. ArgB subfamily.

Its subcellular location is the cytoplasm. The catalysed reaction is N-acetyl-L-glutamate + ATP = N-acetyl-L-glutamyl 5-phosphate + ADP. It functions in the pathway amino-acid biosynthesis; L-arginine biosynthesis; N(2)-acetyl-L-ornithine from L-glutamate: step 2/4. Catalyzes the ATP-dependent phosphorylation of N-acetyl-L-glutamate. The protein is Acetylglutamate kinase of Syntrophomonas wolfei subsp. wolfei (strain DSM 2245B / Goettingen).